Reading from the N-terminus, the 630-residue chain is 1-deoxy-D-xylulose-5-phosphate synthase (630 aa).

Residues His-73 and 114 to 116 (SHA) each bind thiamine diphosphate. Residue Asp-146 coordinates Mg(2+). Thiamine diphosphate is bound by residues 147–148 (GA), Asn-176, Phe-287, and Glu-371. Position 176 (Asn-176) interacts with Mg(2+).

It belongs to the transketolase family. DXPS subfamily. In terms of assembly, homodimer. The cofactor is Mg(2+). It depends on thiamine diphosphate as a cofactor.

It catalyses the reaction D-glyceraldehyde 3-phosphate + pyruvate + H(+) = 1-deoxy-D-xylulose 5-phosphate + CO2. The protein operates within metabolic intermediate biosynthesis; 1-deoxy-D-xylulose 5-phosphate biosynthesis; 1-deoxy-D-xylulose 5-phosphate from D-glyceraldehyde 3-phosphate and pyruvate: step 1/1. Its function is as follows. Catalyzes the acyloin condensation reaction between C atoms 2 and 3 of pyruvate and glyceraldehyde 3-phosphate to yield 1-deoxy-D-xylulose-5-phosphate (DXP). The chain is 1-deoxy-D-xylulose-5-phosphate synthase from Corynebacterium jeikeium (strain K411).